The sequence spans 338 residues: Ketol-acid reductoisomerase (NADP(+)) (338 aa).

In terms of domain architecture, KARI N-terminal Rossmann spans 1 to 181 (MKVFYDKDCD…GGGKGGIIET (181 aa)). Residues 24-27 (YGSQ), R47, and S52 each bind NADP(+). The active site involves H107. Position 133 (G133) interacts with NADP(+). Residues 182 to 327 (NFKEETETDL…GQLRAMMPWI (146 aa)) enclose the KARI C-terminal knotted domain. D190, E194, E226, and E230 together coordinate Mg(2+). S251 contributes to the substrate binding site.

Belongs to the ketol-acid reductoisomerase family. Mg(2+) is required as a cofactor.

It carries out the reaction (2R)-2,3-dihydroxy-3-methylbutanoate + NADP(+) = (2S)-2-acetolactate + NADPH + H(+). The catalysed reaction is (2R,3R)-2,3-dihydroxy-3-methylpentanoate + NADP(+) = (S)-2-ethyl-2-hydroxy-3-oxobutanoate + NADPH + H(+). It functions in the pathway amino-acid biosynthesis; L-isoleucine biosynthesis; L-isoleucine from 2-oxobutanoate: step 2/4. It participates in amino-acid biosynthesis; L-valine biosynthesis; L-valine from pyruvate: step 2/4. Functionally, involved in the biosynthesis of branched-chain amino acids (BCAA). Catalyzes an alkyl-migration followed by a ketol-acid reduction of (S)-2-acetolactate (S2AL) to yield (R)-2,3-dihydroxy-isovalerate. In the isomerase reaction, S2AL is rearranged via a Mg-dependent methyl migration to produce 3-hydroxy-3-methyl-2-ketobutyrate (HMKB). In the reductase reaction, this 2-ketoacid undergoes a metal-dependent reduction by NADPH to yield (R)-2,3-dihydroxy-isovalerate. In Delftia acidovorans (strain DSM 14801 / SPH-1), this protein is Ketol-acid reductoisomerase (NADP(+)).